The following is a 933-amino-acid chain: Isoleucine--tRNA ligase (933 aa).

The 'HIGH' region signature appears at 57 to 67 (PYANGNIHVGH). Glu-554 lines the L-isoleucyl-5'-AMP pocket. Positions 595 to 599 (KMSKS) match the 'KMSKS' region motif. Lys-598 contacts ATP.

The protein belongs to the class-I aminoacyl-tRNA synthetase family. IleS type 1 subfamily. Monomer.

It localises to the cytoplasm. The enzyme catalyses tRNA(Ile) + L-isoleucine + ATP = L-isoleucyl-tRNA(Ile) + AMP + diphosphate. Its function is as follows. Catalyzes the attachment of isoleucine to tRNA(Ile). As IleRS can inadvertently accommodate and process structurally similar amino acids such as valine, to avoid such errors it has two additional distinct tRNA(Ile)-dependent editing activities. One activity is designated as 'pretransfer' editing and involves the hydrolysis of activated Val-AMP. The other activity is designated 'posttransfer' editing and involves deacylation of mischarged Val-tRNA(Ile). The protein is Isoleucine--tRNA ligase of Streptococcus pyogenes serotype M6 (strain ATCC BAA-946 / MGAS10394).